A 369-amino-acid chain; its full sequence is 4-hydroxy-3-methylbut-2-en-1-yl diphosphate synthase (flavodoxin) (369 aa).

[4Fe-4S] cluster contacts are provided by Cys-270, Cys-273, Cys-305, and Glu-312.

Belongs to the IspG family. [4Fe-4S] cluster serves as cofactor.

It carries out the reaction (2E)-4-hydroxy-3-methylbut-2-enyl diphosphate + oxidized [flavodoxin] + H2O + 2 H(+) = 2-C-methyl-D-erythritol 2,4-cyclic diphosphate + reduced [flavodoxin]. It functions in the pathway isoprenoid biosynthesis; isopentenyl diphosphate biosynthesis via DXP pathway; isopentenyl diphosphate from 1-deoxy-D-xylulose 5-phosphate: step 5/6. In terms of biological role, converts 2C-methyl-D-erythritol 2,4-cyclodiphosphate (ME-2,4cPP) into 1-hydroxy-2-methyl-2-(E)-butenyl 4-diphosphate. The polypeptide is 4-hydroxy-3-methylbut-2-en-1-yl diphosphate synthase (flavodoxin) (Pseudomonas savastanoi pv. phaseolicola (strain 1448A / Race 6) (Pseudomonas syringae pv. phaseolicola (strain 1448A / Race 6))).